The chain runs to 258 residues: GTP cyclohydrolase FolE2 (258 aa).

The protein belongs to the GTP cyclohydrolase IV family.

The catalysed reaction is GTP + H2O = 7,8-dihydroneopterin 3'-triphosphate + formate + H(+). It functions in the pathway cofactor biosynthesis; 7,8-dihydroneopterin triphosphate biosynthesis; 7,8-dihydroneopterin triphosphate from GTP: step 1/1. In terms of biological role, converts GTP to 7,8-dihydroneopterin triphosphate. This Pseudothermotoga lettingae (strain ATCC BAA-301 / DSM 14385 / NBRC 107922 / TMO) (Thermotoga lettingae) protein is GTP cyclohydrolase FolE2.